The following is a 440-amino-acid chain: tRNA(Ile)-lysidine synthase (440 aa).

31 to 36 (SGGADS) is an ATP binding site.

This sequence belongs to the tRNA(Ile)-lysidine synthase family.

Its subcellular location is the cytoplasm. The catalysed reaction is cytidine(34) in tRNA(Ile2) + L-lysine + ATP = lysidine(34) in tRNA(Ile2) + AMP + diphosphate + H(+). Functionally, ligates lysine onto the cytidine present at position 34 of the AUA codon-specific tRNA(Ile) that contains the anticodon CAU, in an ATP-dependent manner. Cytidine is converted to lysidine, thus changing the amino acid specificity of the tRNA from methionine to isoleucine. The polypeptide is tRNA(Ile)-lysidine synthase (Borrelia garinii subsp. bavariensis (strain ATCC BAA-2496 / DSM 23469 / PBi) (Borreliella bavariensis)).